The primary structure comprises 417 residues: Serine hydroxymethyltransferase 2 (417 aa).

(6S)-5,6,7,8-tetrahydrofolate is bound by residues L121 and G125 to L127. K230 is subject to N6-(pyridoxal phosphate)lysine. S355–F357 serves as a coordination point for (6S)-5,6,7,8-tetrahydrofolate.

The protein belongs to the SHMT family. As to quaternary structure, homodimer. Pyridoxal 5'-phosphate is required as a cofactor.

Its subcellular location is the cytoplasm. The enzyme catalyses (6R)-5,10-methylene-5,6,7,8-tetrahydrofolate + glycine + H2O = (6S)-5,6,7,8-tetrahydrofolate + L-serine. Its pathway is one-carbon metabolism; tetrahydrofolate interconversion. The protein operates within amino-acid biosynthesis; glycine biosynthesis; glycine from L-serine: step 1/1. Functionally, catalyzes the reversible interconversion of serine and glycine with tetrahydrofolate (THF) serving as the one-carbon carrier. This reaction serves as the major source of one-carbon groups required for the biosynthesis of purines, thymidylate, methionine, and other important biomolecules. Also exhibits THF-independent aldolase activity toward beta-hydroxyamino acids, producing glycine and aldehydes, via a retro-aldol mechanism. In Colwellia psychrerythraea (strain 34H / ATCC BAA-681) (Vibrio psychroerythus), this protein is Serine hydroxymethyltransferase 2.